Here is a 443-residue protein sequence, read N- to C-terminus: GPI mannosyltransferase 1 (443 aa).

Helical transmembrane passes span proline 8–tryptophan 28, proline 68–glycine 88, alanine 90–threonine 110, threonine 136–leucine 156, isoleucine 160–tyrosine 180, leucine 232–glycine 252, phenylalanine 273–valine 291, phenylalanine 302–leucine 322, serine 347–leucine 367, isoleucine 374–leucine 394, and leucine 406–alanine 426.

It belongs to the PIGM family.

It is found in the endoplasmic reticulum membrane. It participates in glycolipid biosynthesis; glycosylphosphatidylinositol-anchor biosynthesis. Its function is as follows. Mannosyltransferase involved in glycosylphosphatidylinositol-anchor biosynthesis. Transfers the first alpha-1,4-mannose to GlcN-acyl-PI during GPI precursor assembly. Required for cell wall integrity. The polypeptide is GPI mannosyltransferase 1 (gpi14) (Emericella nidulans (strain FGSC A4 / ATCC 38163 / CBS 112.46 / NRRL 194 / M139) (Aspergillus nidulans)).